The primary structure comprises 676 residues: Methionine--tRNA ligase (676 aa).

Positions 15–25 match the 'HIGH' region motif; it reads PYANGSIHLGH. Residues Cys-146, Cys-149, Cys-159, and Cys-162 each coordinate Zn(2+). The 'KMSKS' region signature appears at 332 to 336; that stretch reads KMSKS. Lys-335 provides a ligand contact to ATP. A tRNA-binding domain is found at 574-676; the sequence is DFAKVDMRIA…SGAQPGMQVK (103 aa).

Belongs to the class-I aminoacyl-tRNA synthetase family. MetG type 1 subfamily. Homodimer. It depends on Zn(2+) as a cofactor.

The protein resides in the cytoplasm. The catalysed reaction is tRNA(Met) + L-methionine + ATP = L-methionyl-tRNA(Met) + AMP + diphosphate. In terms of biological role, is required not only for elongation of protein synthesis but also for the initiation of all mRNA translation through initiator tRNA(fMet) aminoacylation. The sequence is that of Methionine--tRNA ligase from Pectobacterium atrosepticum (strain SCRI 1043 / ATCC BAA-672) (Erwinia carotovora subsp. atroseptica).